Consider the following 403-residue polypeptide: Tryptophan synthase beta chain (403 aa).

Position 93 is an N6-(pyridoxal phosphate)lysine (lysine 93).

Belongs to the TrpB family. As to quaternary structure, tetramer of two alpha and two beta chains. Requires pyridoxal 5'-phosphate as cofactor.

The enzyme catalyses (1S,2R)-1-C-(indol-3-yl)glycerol 3-phosphate + L-serine = D-glyceraldehyde 3-phosphate + L-tryptophan + H2O. It participates in amino-acid biosynthesis; L-tryptophan biosynthesis; L-tryptophan from chorismate: step 5/5. The beta subunit is responsible for the synthesis of L-tryptophan from indole and L-serine. The chain is Tryptophan synthase beta chain from Acinetobacter baylyi (strain ATCC 33305 / BD413 / ADP1).